Here is a 547-residue protein sequence, read N- to C-terminus: Threonine synthase (547 aa).

Position 117 is an N6-(pyridoxal phosphate)lysine (K117). The pyridoxal 5'-phosphate site is built by G272, N273, F274, D276, and T471.

It belongs to the threonine synthase family. Pyridoxal 5'-phosphate is required as a cofactor.

The enzyme catalyses O-phospho-L-homoserine + H2O = L-threonine + phosphate. The protein operates within amino-acid biosynthesis; L-threonine biosynthesis; L-threonine from L-aspartate: step 5/5. Functionally, catalyzes the gamma-elimination of phosphate from L-phosphohomoserine and the beta-addition of water to produce L-threonine. The sequence is that of Threonine synthase from Cryptococcus neoformans var. grubii serotype A (strain H99 / ATCC 208821 / CBS 10515 / FGSC 9487) (Filobasidiella neoformans var. grubii).